Consider the following 643-residue polypeptide: Translation factor GUF1, mitochondrial (643 aa).

The transit peptide at 1–18 (MLASQAIKRIFHRSWKPL) directs the protein to the mitochondrion. Positions 43 to 226 (ENYRNFSIVA…AIIDRIPPPT (184 aa)) constitute a tr-type G domain. GTP-binding positions include 52-59 (AHIDHGKS), 118-122 (DTPGH), and 172-175 (NKID).

This sequence belongs to the TRAFAC class translation factor GTPase superfamily. Classic translation factor GTPase family. LepA subfamily.

It localises to the mitochondrion inner membrane. It catalyses the reaction GTP + H2O = GDP + phosphate + H(+). Functionally, promotes mitochondrial protein synthesis. May act as a fidelity factor of the translation reaction, by catalyzing a one-codon backward translocation of tRNAs on improperly translocated ribosomes. Binds to mitochondrial ribosomes in a GTP-dependent manner. The protein is Translation factor GUF1, mitochondrial of Zygosaccharomyces rouxii (strain ATCC 2623 / CBS 732 / NBRC 1130 / NCYC 568 / NRRL Y-229).